The primary structure comprises 37 residues: Large ribosomal subunit protein bL36 (37 aa).

This sequence belongs to the bacterial ribosomal protein bL36 family.

The protein is Large ribosomal subunit protein bL36 of Cyanothece sp. (strain PCC 7425 / ATCC 29141).